Reading from the N-terminus, the 288-residue chain is 4-diphosphocytidyl-2-C-methyl-D-erythritol kinase (288 aa).

The active site involves K8. 90 to 100 (PFGAGLGGGSS) contributes to the ATP binding site. Residue D132 is part of the active site.

This sequence belongs to the GHMP kinase family. IspE subfamily.

It catalyses the reaction 4-CDP-2-C-methyl-D-erythritol + ATP = 4-CDP-2-C-methyl-D-erythritol 2-phosphate + ADP + H(+). It functions in the pathway isoprenoid biosynthesis; isopentenyl diphosphate biosynthesis via DXP pathway; isopentenyl diphosphate from 1-deoxy-D-xylulose 5-phosphate: step 3/6. Functionally, catalyzes the phosphorylation of the position 2 hydroxy group of 4-diphosphocytidyl-2C-methyl-D-erythritol. In Chlorobium chlorochromatii (strain CaD3), this protein is 4-diphosphocytidyl-2-C-methyl-D-erythritol kinase.